The primary structure comprises 61 residues: Photosystem II reaction center protein K (61 aa).

The propeptide occupies 1-24 (MPNILSLTCICFNSVIYPTSFFFA). A helical membrane pass occupies residues 32 to 52 (IFNPIVDFMPVIPLFFFLLAF).

This sequence belongs to the PsbK family. In terms of assembly, PSII is composed of 1 copy each of membrane proteins PsbA, PsbB, PsbC, PsbD, PsbE, PsbF, PsbH, PsbI, PsbJ, PsbK, PsbL, PsbM, PsbT, PsbX, PsbY, PsbZ, Psb30/Ycf12, at least 3 peripheral proteins of the oxygen-evolving complex and a large number of cofactors. It forms dimeric complexes.

The protein localises to the plastid. The protein resides in the chloroplast thylakoid membrane. Functionally, one of the components of the core complex of photosystem II (PSII). PSII is a light-driven water:plastoquinone oxidoreductase that uses light energy to abstract electrons from H(2)O, generating O(2) and a proton gradient subsequently used for ATP formation. It consists of a core antenna complex that captures photons, and an electron transfer chain that converts photonic excitation into a charge separation. The chain is Photosystem II reaction center protein K from Triticum aestivum (Wheat).